We begin with the raw amino-acid sequence, 185 residues long: Alkyl hydroperoxide reductase AhpD (185 aa).

The active-site Proton donor is Cys132. An intrachain disulfide couples Cys132 to Cys135. The Cysteine sulfenic acid (-SOH) intermediate role is filled by Cys135.

This sequence belongs to the AhpD family.

The catalysed reaction is N(6)-[(R)-dihydrolipoyl]-L-lysyl-[lipoyl-carrier protein] + a hydroperoxide = N(6)-[(R)-lipoyl]-L-lysyl-[lipoyl-carrier protein] + an alcohol + H2O. Antioxidant protein with alkyl hydroperoxidase activity. Required for the reduction of the AhpC active site cysteine residues and for the regeneration of the AhpC enzyme activity. In Anaeromyxobacter sp. (strain Fw109-5), this protein is Alkyl hydroperoxide reductase AhpD.